Consider the following 453-residue polypeptide: Trigger factor (453 aa).

The 86-residue stretch at 171 to 256 folds into the PPIase FKBP-type domain; sequence GDRVTVSFKG…ATKVEAPQDV (86 aa).

This sequence belongs to the FKBP-type PPIase family. Tig subfamily.

The protein resides in the cytoplasm. It carries out the reaction [protein]-peptidylproline (omega=180) = [protein]-peptidylproline (omega=0). Functionally, involved in protein export. Acts as a chaperone by maintaining the newly synthesized protein in an open conformation. Functions as a peptidyl-prolyl cis-trans isomerase. The chain is Trigger factor from Rhodopseudomonas palustris (strain BisB5).